The primary structure comprises 101 residues: Small ribosomal subunit protein uS14 (101 aa).

Belongs to the universal ribosomal protein uS14 family. As to quaternary structure, part of the 30S ribosomal subunit. Contacts proteins S3 and S10.

Functionally, binds 16S rRNA, required for the assembly of 30S particles and may also be responsible for determining the conformation of the 16S rRNA at the A site. The chain is Small ribosomal subunit protein uS14 from Francisella philomiragia subsp. philomiragia (strain ATCC 25017 / CCUG 19701 / FSC 153 / O#319-036).